We begin with the raw amino-acid sequence, 151 residues long: SsrA-binding protein (151 aa).

It belongs to the SmpB family.

The protein localises to the cytoplasm. Its function is as follows. Required for rescue of stalled ribosomes mediated by trans-translation. Binds to transfer-messenger RNA (tmRNA), required for stable association of tmRNA with ribosomes. tmRNA and SmpB together mimic tRNA shape, replacing the anticodon stem-loop with SmpB. tmRNA is encoded by the ssrA gene; the 2 termini fold to resemble tRNA(Ala) and it encodes a 'tag peptide', a short internal open reading frame. During trans-translation Ala-aminoacylated tmRNA acts like a tRNA, entering the A-site of stalled ribosomes, displacing the stalled mRNA. The ribosome then switches to translate the ORF on the tmRNA; the nascent peptide is terminated with the 'tag peptide' encoded by the tmRNA and targeted for degradation. The ribosome is freed to recommence translation, which seems to be the essential function of trans-translation. The sequence is that of SsrA-binding protein from Geotalea uraniireducens (strain Rf4) (Geobacter uraniireducens).